The sequence spans 150 residues: UPF0178 protein BamMC406_1579 (150 aa).

It belongs to the UPF0178 family.

This is UPF0178 protein BamMC406_1579 from Burkholderia ambifaria (strain MC40-6).